The chain runs to 973 residues: Ras-related protein Rab-44 (973 aa).

The segment covering 1–21 (MEKGKGVSRKGRKLASSRRRQ) has biased composition (basic residues). Residues 1–42 (MEKGKGVSRKGRKLASSRRRQAREPADGQDAPVAAEAESWPS) are disordered. Positions 77–111 (GGEEPQMIFDWVDVESRGHLSLEEFSSGLKNVFGS) constitute an EF-hand domain. Residues 112-140 (SPGTHRLRTKRSLPSQRESVTSTLPVPEE) are disordered. The span at 123 to 135 (SLPSQRESVTSTL) shows a compositional bias: polar residues. The stretch at 219-310 (LYKVRQLYEE…ERDLAGQLEE (92 aa)) forms a coiled coil. Disordered stretches follow at residues 319 to 368 (RGHL…FGNN), 421 to 481 (FSQE…GSFL), 493 to 708 (GTVE…GLAV), and 724 to 779 (EAQP…GKPQ). Positions 428 to 440 (DPDPGPRGSPEVP) are enriched in pro residues. Residues 445-457 (KDGKGVEDPKGQD) are compositionally biased toward basic and acidic residues. A compositionally biased stretch (low complexity) spans 513–524 (GLSSSPQSPAGS). Basic and acidic residues-rich tracts occupy residues 548–559 (SLEREVMAEDLK), 598–608 (HLARQESHAKG), and 654–663 (SESHGLEARS). The span at 665-680 (ESPQQDDPLPNTSQPP) shows a compositional bias: polar residues. The segment covering 750–766 (AESRPEDPRTDLQEAER) has biased composition (basic and acidic residues). GTP-binding positions include 792–799 (GDSNVGKT), 840–844 (DTAGQ), and 898–901 (NKMD). Residues Cys-971 and Cys-972 are each lipidated (S-geranylgeranyl cysteine).

The protein belongs to the small GTPase superfamily. Rab family.

The protein resides in the cell membrane. The sequence is that of Ras-related protein Rab-44 (Rab44) from Mus musculus (Mouse).